The chain runs to 570 residues: Putative ABC transporter ATP-binding protein MW2603 (570 aa).

ABC transporter domains are found at residues 6-247 (ISFK…GIRE) and 304-537 (LELN…ASLR). Residues 40–47 (GASGSGKS) and 338–345 (GHNGAGKS) each bind ATP.

Belongs to the ABC transporter superfamily.

The protein resides in the cell membrane. Functionally, probably part of an ABC transporter complex. Responsible for energy coupling to the transport system. The chain is Putative ABC transporter ATP-binding protein MW2603 from Staphylococcus aureus (strain MW2).